A 321-amino-acid polypeptide reads, in one-letter code: Olfactory receptor 52N2 (321 aa).

Over 1–27 (MSGDNSSSLTPGFFILNGVPGLEATHI) the chain is Extracellular. Asn-5 carries an N-linked (GlcNAc...) asparagine glycan. The chain crosses the membrane as a helical span at residues 28-48 (WISLPFCFMYIIAVVGNCGLI). At 49-56 (CLISHEEA) the chain is on the cytoplasmic side. The chain crosses the membrane as a helical span at residues 57–77 (LHRPMYYFLALLSFTDVTLCT). At 78–101 (TMVPNMLCIFWFNLKEIDFNACLA) the chain is on the extracellular side. The cysteines at positions 99 and 191 are disulfide-linked. Residues 102 to 122 (QMFFVHMLTGMESGVLMLMAL) traverse the membrane as a helical segment. Residues 123-141 (DRYVAICYPLRYATILTNP) lie on the Cytoplasmic side of the membrane. Residues 142–162 (VIAKAGLATFLRNVMLIIPFT) traverse the membrane as a helical segment. Residues 163-198 (LLTKRLPYCRGNFIPHTYCDHMSVAKVSCGNFKVNA) are Extracellular-facing. A helical membrane pass occupies residues 199–219 (IYGLMVALLIGVFDICCISVS). The Cytoplasmic portion of the chain corresponds to 220-239 (YTMILQAVMSLSSADARHKA). Residues 240–260 (FSTCTSHMCSIVITYVAAFFT) traverse the membrane as a helical segment. Over 261-276 (FFTHRFVGHNIPNHIH) the chain is Extracellular. The chain crosses the membrane as a helical span at residues 277-297 (IIVANLYLLLPPTMNPIVYGV). Residues 298–321 (KTKQIQEGVIKFLLGDKVSFTYDK) are Cytoplasmic-facing.

Belongs to the G-protein coupled receptor 1 family.

It localises to the cell membrane. Functionally, odorant receptor. The sequence is that of Olfactory receptor 52N2 (OR52N2) from Homo sapiens (Human).